Here is a 202-residue protein sequence, read N- to C-terminus: B-cell CLL/lymphoma 7 protein family member B (202 aa).

The segment at 53-202 is disordered; that stretch reads DSKEKEKSKS…PVVPQTTSES (150 aa). A compositionally biased stretch (polar residues) spans 90-99; it reads ENSNQSSVSD. Residues 107-123 show a composition bias toward low complexity; the sequence is SSTNSSPSPQQSESLSP. 7 positions are modified to phosphoserine: Ser114, Ser118, Ser120, Ser122, Ser127, Ser148, and Ser152.

The protein belongs to the BCL7 family.

Its function is as follows. Positive regulator of apoptosis. Plays a role in the Wnt signaling pathway, negatively regulating the expression of Wnt signaling components CTNNB1 and HMGA1. Involved in cell cycle progression, maintenance of the nuclear structure and stem cell differentiation. May play a role in lung tumor development or progression. The chain is B-cell CLL/lymphoma 7 protein family member B (Bcl7b) from Mus musculus (Mouse).